Consider the following 180-residue polypeptide: NADH-quinone oxidoreductase subunit I (180 aa).

2 consecutive 4Fe-4S ferredoxin-type domains span residues 48–80 (IVLT…LQKS) and 90–119 (EFFR…LTPD). 8 residues coordinate [4Fe-4S] cluster: Cys60, Cys63, Cys66, Cys70, Cys99, Cys102, Cys105, and Cys109. Residues 161-174 (KPKGDAENEAKPID) show a composition bias toward basic and acidic residues. The tract at residues 161-180 (KPKGDAENEAKPIDVKSLLP) is disordered.

Belongs to the complex I 23 kDa subunit family. NDH-1 is composed of 13 different subunits. Subunits NuoA, H, J, K, L, M, N constitute the membrane sector of the complex. Requires [4Fe-4S] cluster as cofactor.

Its subcellular location is the cell inner membrane. It carries out the reaction a quinone + NADH + 5 H(+)(in) = a quinol + NAD(+) + 4 H(+)(out). Its function is as follows. NDH-1 shuttles electrons from NADH, via FMN and iron-sulfur (Fe-S) centers, to quinones in the respiratory chain. The immediate electron acceptor for the enzyme in this species is believed to be ubiquinone. Couples the redox reaction to proton translocation (for every two electrons transferred, four hydrogen ions are translocated across the cytoplasmic membrane), and thus conserves the redox energy in a proton gradient. The polypeptide is NADH-quinone oxidoreductase subunit I (Shewanella oneidensis (strain ATCC 700550 / JCM 31522 / CIP 106686 / LMG 19005 / NCIMB 14063 / MR-1)).